We begin with the raw amino-acid sequence, 434 residues long: 26S proteasome regulatory subunit RPN6 (434 aa).

S2 carries the N-acetylserine modification. One can recognise a PCI domain in the interval 235-404; that stretch reads AFSYFFESFE…GWLYVYETPN (170 aa).

The protein belongs to the proteasome subunit S9 family. Component of the lid subcomplex of the 19S proteasome regulatory particle complex (also named PA700 complex). The 26S proteasome consists of a 20S proteasome core and two 19S regulatory subunits. N-acetylated by NAT1.

In terms of biological role, component of the lid subcomplex of the 26S proteasome, a multiprotein complex involved in the ATP-dependent degradation of ubiquitinated proteins. In the complex, RPN6 is required for proteasome assembly. The chain is 26S proteasome regulatory subunit RPN6 (RPN6) from Saccharomyces cerevisiae (strain ATCC 204508 / S288c) (Baker's yeast).